The primary structure comprises 135 residues: Flagellar assembly factor FliW 2 (135 aa).

Belongs to the FliW family. As to quaternary structure, interacts with translational regulator CsrA and flagellin(s).

Its subcellular location is the cytoplasm. Its function is as follows. Acts as an anti-CsrA protein, binds CsrA and prevents it from repressing translation of its target genes, one of which is flagellin. Binds to flagellin and participates in the assembly of the flagellum. The protein is Flagellar assembly factor FliW 2 of Helicobacter acinonychis (strain Sheeba).